Reading from the N-terminus, the 207-residue chain is Basic helix-loop-helix transcription factor scleraxis (207 aa).

2 disordered regions span residues 1-91 (MSFA…RDRT) and 151-183 (AFFH…QPKQ). Basic and acidic residues predominate over residues 73-91 (PGREPRQRHTANARERDRT). In terms of domain architecture, bHLH spans 78-130 (RQRHTANARERDRTNSVNTAFTALRTLIPTEPADRKLSKIETLRLASSYISHL). The segment covering 161–171 (PLPPPPPPPPL) has biased composition (pro residues).

As to quaternary structure, efficient DNA binding requires dimerization with another bHLH protein. Dimerizes and binds the E-box consensus sequence with E12. As to expression, expressed in mesenchymal precursors of cartilage and in connective tissue. Highly expressed in tendons in the limb, tongue and diaphragm and in cartilage of the bronchi.

It localises to the nucleus. Its function is as follows. Plays an early essential role in mesoderm formation, as well as a later role in formation of somite-derived chondrogenic lineages. This Mus musculus (Mouse) protein is Basic helix-loop-helix transcription factor scleraxis (Scx).